The primary structure comprises 203 residues: uncharacterized protein (203 aa).

An N-terminal signal peptide occupies residues 1–20; it reads MDELILPILILLFLVFVAYF.

This is an uncharacterized protein from Pasteurella multocida (strain Pm70).